A 576-amino-acid polypeptide reads, in one-letter code: MTIGTITSQVNYRAALNTLWASLMLEELVRMGVKQICIAPGSRSTSLTLAAVANNKLTIHTHFDERGLGFLALGIAKASQEPVAVVVTSGTAVANLLPAVAEAGLTGEKLVLLTSDRPVELIQCGANQAIVQHDIFSQHVTAFHDIPSPTLDISPAWLLSTIDEAMQLQQRQGRAIHFNCHYPEPLYGDDVDFSEYLAPVSEWKGDELPYVSHQQALAPHIAIDKRQWQSLTQRKGVVIVGRLAPEELGQVTLLAEKLGWPLLLDPQAGGSSAWAGFDVWLQNASCQAFLQQADTVIQFGARIVSKRLLQFIATSSIEHYWLIDPRAGRLDSTHRRSSRIQAPIGEWATCALSLTENSEHAGWAMPLQVVSERYFEMLGEYSDQLTELSLAVNLGAWLPDKTELFLGNSLIIRLLDMVGKLPSTATFANRGASGIDGLIATIAGINKARQAPMVGLLGDTSLLYDLNSLALLRDVSQPVVIIVTNNDGGGIFDLLPVPALQRDELYRMPHGLEFSHAAAMFGLAYYCPESLPQAEEQCLYALTQPKTTIIEIKTPAGEAGEMIKALFGKVKNATLL.

It belongs to the TPP enzyme family. MenD subfamily. Homodimer. The cofactor is Mg(2+). Mn(2+) is required as a cofactor. Requires thiamine diphosphate as cofactor.

It catalyses the reaction isochorismate + 2-oxoglutarate + H(+) = 5-enolpyruvoyl-6-hydroxy-2-succinyl-cyclohex-3-ene-1-carboxylate + CO2. The protein operates within quinol/quinone metabolism; 1,4-dihydroxy-2-naphthoate biosynthesis; 1,4-dihydroxy-2-naphthoate from chorismate: step 2/7. It functions in the pathway quinol/quinone metabolism; menaquinone biosynthesis. Catalyzes the thiamine diphosphate-dependent decarboxylation of 2-oxoglutarate and the subsequent addition of the resulting succinic semialdehyde-thiamine pyrophosphate anion to isochorismate to yield 2-succinyl-5-enolpyruvyl-6-hydroxy-3-cyclohexene-1-carboxylate (SEPHCHC). This is 2-succinyl-5-enolpyruvyl-6-hydroxy-3-cyclohexene-1-carboxylate synthase from Photobacterium profundum (strain SS9).